The sequence spans 992 residues: ATP-dependent DNA helicase PIF7 (992 aa).

Residues 1-21 (MWDGPLRSRQNLRTVAKLRSS) constitute a mitochondrion transit peptide. Disordered stretches follow at residues 20–43 (SSGC…GETA), 145–182 (TVNK…TAAS), and 190–209 (LDSS…AVTQ). Composition is skewed to polar residues over residues 23 to 43 (CPLT…GETA), 173 to 182 (NVDNTTTAAS), and 191 to 208 (DSSS…QAVT). Position 237–244 (237–244 (GGAGTGKS)) interacts with ATP. A DNA-binding region spans residues 651–670 (QAYVALSRCTDVANLVIENF).

Belongs to the helicase family. PIF1 subfamily. Monomer. It depends on Mg(2+) as a cofactor.

The protein resides in the mitochondrion matrix. It is found in the kinetoplast. The catalysed reaction is Couples ATP hydrolysis with the unwinding of duplex DNA at the replication fork by translocating in the 5'-3' direction. This creates two antiparallel DNA single strands (ssDNA). The leading ssDNA polymer is the template for DNA polymerase III holoenzyme which synthesizes a continuous strand.. It catalyses the reaction ATP + H2O = ADP + phosphate + H(+). Its function is as follows. DNA-dependent ATPase and 5'-3' DNA helicase required for the maintenance of mitochondrial (kinetoplast) genome stability. This is ATP-dependent DNA helicase PIF7 from Trypanosoma brucei brucei (strain 927/4 GUTat10.1).